The primary structure comprises 424 residues: Methylthioribose-1-phosphate isomerase (424 aa).

Aspartate 281 acts as the Proton donor in catalysis.

Belongs to the eIF-2B alpha/beta/delta subunits family. MtnA subfamily.

Its subcellular location is the cytoplasm. It localises to the nucleus. The enzyme catalyses 5-(methylsulfanyl)-alpha-D-ribose 1-phosphate = 5-(methylsulfanyl)-D-ribulose 1-phosphate. It functions in the pathway amino-acid biosynthesis; L-methionine biosynthesis via salvage pathway; L-methionine from S-methyl-5-thio-alpha-D-ribose 1-phosphate: step 1/6. In terms of biological role, catalyzes the interconversion of methylthioribose-1-phosphate (MTR-1-P) into methylthioribulose-1-phosphate (MTRu-1-P). The protein is Methylthioribose-1-phosphate isomerase of Candida dubliniensis (strain CD36 / ATCC MYA-646 / CBS 7987 / NCPF 3949 / NRRL Y-17841) (Yeast).